The primary structure comprises 297 residues: L-threonate dehydrogenase (297 aa).

Residues 3-31 (RNIG…VHAC) and T97 each bind NAD(+). The active site involves K173. K241 is an NAD(+) binding site.

The protein belongs to the HIBADH-related family. L-threonate dehydrogenase subfamily.

The enzyme catalyses L-threonate + NAD(+) = 2-dehydro-L-erythronate + NADH + H(+). Catalyzes oxidation of L-threonate to 2-oxo-tetronate. Can use either NAD(+) or NADP(+) as cosubstrate, with a preference for NAD(+). This is L-threonate dehydrogenase from Cupriavidus necator (strain ATCC 17699 / DSM 428 / KCTC 22496 / NCIMB 10442 / H16 / Stanier 337) (Ralstonia eutropha).